The sequence spans 29 residues: Vodo peptide N (29 aa).

The cyclopeptide (Gly-Asn) cross-link spans 1 to 29 (GLPVCGETCTLGKCYTAGCSCSWPVCYRN). 3 disulfide bridges follow: Cys-5–Cys-19, Cys-9–Cys-21, and Cys-14–Cys-26.

In terms of processing, this is a cyclic peptide.

Probably participates in a plant defense mechanism. In Viola odorata (Sweet violet), this protein is Vodo peptide N.